Reading from the N-terminus, the 251-residue chain is Sugar fermentation stimulation protein homolog (251 aa).

It belongs to the SfsA family.

In Yersinia pseudotuberculosis serotype O:1b (strain IP 31758), this protein is Sugar fermentation stimulation protein homolog.